We begin with the raw amino-acid sequence, 361 residues long: Peptide chain release factor 1 (361 aa).

Gln236 carries the post-translational modification N5-methylglutamine.

It belongs to the prokaryotic/mitochondrial release factor family. Post-translationally, methylated by PrmC. Methylation increases the termination efficiency of RF1.

It is found in the cytoplasm. Functionally, peptide chain release factor 1 directs the termination of translation in response to the peptide chain termination codons UAG and UAA. This is Peptide chain release factor 1 from Lactobacillus acidophilus (strain ATCC 700396 / NCK56 / N2 / NCFM).